A 346-amino-acid polypeptide reads, in one-letter code: Methylthioribose-1-phosphate isomerase (346 aa).

Substrate contacts are provided by residues 50–52 (RGA), Arg93, and Gln196. The active-site Proton donor is Asp237. Position 247 to 248 (247 to 248 (NK)) interacts with substrate.

This sequence belongs to the eIF-2B alpha/beta/delta subunits family. MtnA subfamily.

The catalysed reaction is 5-(methylsulfanyl)-alpha-D-ribose 1-phosphate = 5-(methylsulfanyl)-D-ribulose 1-phosphate. Its pathway is amino-acid biosynthesis; L-methionine biosynthesis via salvage pathway; L-methionine from S-methyl-5-thio-alpha-D-ribose 1-phosphate: step 1/6. Catalyzes the interconversion of methylthioribose-1-phosphate (MTR-1-P) into methylthioribulose-1-phosphate (MTRu-1-P). This Alkalilimnicola ehrlichii (strain ATCC BAA-1101 / DSM 17681 / MLHE-1) protein is Methylthioribose-1-phosphate isomerase.